Consider the following 556-residue polypeptide: 2-succinyl-5-enolpyruvyl-6-hydroxy-3-cyclohexene-1-carboxylate synthase (556 aa).

The protein belongs to the TPP enzyme family. MenD subfamily. Homodimer. It depends on Mg(2+) as a cofactor. Mn(2+) is required as a cofactor. Thiamine diphosphate serves as cofactor.

It carries out the reaction isochorismate + 2-oxoglutarate + H(+) = 5-enolpyruvoyl-6-hydroxy-2-succinyl-cyclohex-3-ene-1-carboxylate + CO2. Its pathway is quinol/quinone metabolism; 1,4-dihydroxy-2-naphthoate biosynthesis; 1,4-dihydroxy-2-naphthoate from chorismate: step 2/7. It functions in the pathway quinol/quinone metabolism; menaquinone biosynthesis. Functionally, catalyzes the thiamine diphosphate-dependent decarboxylation of 2-oxoglutarate and the subsequent addition of the resulting succinic semialdehyde-thiamine pyrophosphate anion to isochorismate to yield 2-succinyl-5-enolpyruvyl-6-hydroxy-3-cyclohexene-1-carboxylate (SEPHCHC). In Shigella boydii serotype 18 (strain CDC 3083-94 / BS512), this protein is 2-succinyl-5-enolpyruvyl-6-hydroxy-3-cyclohexene-1-carboxylate synthase.